Here is a 633-residue protein sequence, read N- to C-terminus: MEKYDYSELGLKAGLEIHQQLDSKEKLFCRCPTLIRDVKESDFEFFRYLRATESEMGEKDRAAVEQTKIRRKYIYKAYDTTCLIENDEEPPRELNKEALDISLGIAKLFNMKPVDQMHVMRKIVVDGSNTSGFQRTAFLASDGFIETSQGLCGIDSLCVEEEAAQKIEEIGDSIIYSLDRLGIPLVEIATAPDIKSPRHAREVAEQIGMFLRSTGKVKRGLGTIRQDVNVSIAEGARVEIKGVQALDLIEDIIRREVERQLNLLFIRQELIERKAFVCEEIYDITGLFVDTKSKVLQKGVKKGAVLAAHLKKFEGLVGKEVQPGRRLGTEFSDRAKTAGVGGIFHTDELPNYGITEKEVKTVRDAIGASAGDAVIMVADEPEKARLAIEAVIQRAKEAMEGIPEETRKALPDGNTAYMRPLPGAARMYPETDVPQIEISQEYFDSIEIPELLTERAKRFVSENGLNQELAEKIAYSKHLPLFEELIETYGKDENVNSTLIARTLVGIVPEIRRNGVETENLTDEHFKGLFVAISNQEIAKEAIQDLLAALAEEPELSTPEAISNLGLSAFDPEEVENFIKKTVREREDFIKEKGPAALGPLMGIVMKEYRGTVDGKILSQMLKKELDSFINQG.

The protein belongs to the GatB/GatE family. GatE subfamily. In terms of assembly, heterodimer of GatD and GatE.

The catalysed reaction is L-glutamyl-tRNA(Gln) + L-glutamine + ATP + H2O = L-glutaminyl-tRNA(Gln) + L-glutamate + ADP + phosphate + H(+). Its function is as follows. Allows the formation of correctly charged Gln-tRNA(Gln) through the transamidation of misacylated Glu-tRNA(Gln) in organisms which lack glutaminyl-tRNA synthetase. The reaction takes place in the presence of glutamine and ATP through an activated gamma-phospho-Glu-tRNA(Gln). The GatDE system is specific for glutamate and does not act on aspartate. The sequence is that of Glutamyl-tRNA(Gln) amidotransferase subunit E from Methanosarcina barkeri (strain Fusaro / DSM 804).